The primary structure comprises 86 residues: Large ribosomal subunit protein bL27 (86 aa).

Positions 1–10 are enriched in gly residues; it reads MAQKKGGGST. The tract at residues 1–21 is disordered; the sequence is MAQKKGGGSTRNGRDSESKRL.

This sequence belongs to the bacterial ribosomal protein bL27 family.

The sequence is that of Large ribosomal subunit protein bL27 from Ralstonia nicotianae (strain ATCC BAA-1114 / GMI1000) (Ralstonia solanacearum).